Here is a 276-residue protein sequence, read N- to C-terminus: Ribosomal RNA small subunit methyltransferase A (276 aa).

S-adenosyl-L-methionine is bound by residues H15, L17, G42, E64, D89, and N108.

Belongs to the class I-like SAM-binding methyltransferase superfamily. rRNA adenine N(6)-methyltransferase family. RsmA subfamily.

Its subcellular location is the cytoplasm. The catalysed reaction is adenosine(1518)/adenosine(1519) in 16S rRNA + 4 S-adenosyl-L-methionine = N(6)-dimethyladenosine(1518)/N(6)-dimethyladenosine(1519) in 16S rRNA + 4 S-adenosyl-L-homocysteine + 4 H(+). In terms of biological role, specifically dimethylates two adjacent adenosines (A1518 and A1519) in the loop of a conserved hairpin near the 3'-end of 16S rRNA in the 30S particle. May play a critical role in biogenesis of 30S subunits. The sequence is that of Ribosomal RNA small subunit methyltransferase A from Prochlorococcus marinus (strain MIT 9312).